We begin with the raw amino-acid sequence, 79 residues long: Conotoxin ArMSGL-0123 (79 aa).

The signal sequence occupies residues 1-20; sequence MSRLGIMVLTLLLLVFIVTS. Positions 21-44 are excised as a propeptide; sequence HQDAGEKQATKRAAVNFRWRRSFT. 3 disulfide bridges follow: Cys52–Cys64, Cys56–Cys73, and Cys63–Cys77. Leu78 is subject to Leucine amide.

It belongs to the conotoxin O3 superfamily. Expressed by the venom duct.

The protein resides in the secreted. This chain is Conotoxin ArMSGL-0123, found in Conus arenatus (Sand-dusted cone).